We begin with the raw amino-acid sequence, 953 residues long: Coatomer subunit beta (953 aa).

N-acetylthreonine is present on threonine 2. HEAT repeat units lie at residues 96–131 (HEMILVCDAYRKDLQHPNEFIRGSTLRFLCKLKEAE), 132–168 (LLEPLMPAIRACLEHRHSYVRRNAVLAIYTIYRNFEH), 240–276 (SERARFIRCIYNLLQSSSPAVKYEAAGTLVTLSSAPT), 277–314 (AIKAAAQCYIDLIIKESDNNVKLIVLDRLIELKEHPAH), 316–353 (RVLQDLVMDILRVLSTPDLEVRKKTLQLALDLVSSRNV), and 396–433 (DMAANVIPVLMEFLSDSNEAAAADVLEFVREAIQRFDN). Residue lysine 494 is modified to N6-acetyllysine.

As to quaternary structure, oligomeric complex that consists of at least the alpha, beta, beta', gamma, delta, epsilon and zeta subunits. Interacts with CAPN8 and PRKCE. Interacts with SCYL1. Interacts with COPG1. Interacts with ARF1 (myristoylated); this interaction is required for binding of COPB1 to Golgi membranes. Interacts (via trunk domain) with ARF1 (via switch I region); the interaction is direct. Interacts with KCNK2 (via N-terminus); this interaction increases the channel-mediated whole cell currents and promotes plasma membrane expression of KCNK2. Interacts with STX17. Interacts with TMEM115. Interacts with TMEM41B. As to expression, high expression in the lung, kidney, skeletal muscle and small intestine, and lower level of expression in heart, liver, spleen, stomach and fat.

It is found in the cytoplasm. Its subcellular location is the golgi apparatus membrane. It localises to the cytoplasmic vesicle. The protein localises to the COPI-coated vesicle membrane. The protein resides in the cell membrane. It is found in the endoplasmic reticulum-Golgi intermediate compartment. In terms of biological role, the coatomer is a cytosolic protein complex that binds to dilysine motifs and reversibly associates with Golgi non-clathrin-coated vesicles, which further mediate biosynthetic protein transport from the ER, via the Golgi up to the trans Golgi network. Coatomer complex is required for budding from Golgi membranes, and is essential for the retrograde Golgi-to-ER transport of dilysine-tagged proteins. In mammals, the coatomer can only be recruited by membranes associated to ADP-ribosylation factors (ARFs), which are small GTP-binding proteins; the complex also influences the Golgi structural integrity, as well as the processing, activity, and endocytic recycling of LDL receptors. Plays a functional role in facilitating the transport of kappa-type opioid receptor mRNAs into axons and enhances translation of these proteins. Required for limiting lipid storage in lipid droplets. Involved in lipid homeostasis by regulating the presence of perilipin family members PLIN2 and PLIN3 at the lipid droplet surface and promoting the association of adipocyte surface triglyceride lipase (PNPLA2) with the lipid droplet to mediate lipolysis. Involved in the Golgi disassembly and reassembly processes during cell cycle. Involved in autophagy by playing a role in early endosome function. Plays a role in organellar compartmentalization of secretory compartments including endoplasmic reticulum (ER)-Golgi intermediate compartment (ERGIC), Golgi, trans-Golgi network (TGN) and recycling endosomes, and in biosynthetic transport of CAV1. This chain is Coatomer subunit beta, found in Sus scrofa (Pig).